Here is a 108-residue protein sequence, read N- to C-terminus: Long neurotoxin 13 (108 aa).

A signal peptide spans 1–21 (MKTLLLTLVVVTIVCLDLAYT). Cystine bridges form between Cys-24–Cys-42, Cys-35–Cys-63, Cys-48–Cys-52, Cys-67–Cys-78, and Cys-79–Cys-84.

Belongs to the three-finger toxin family. Long-chain subfamily. Type II alpha-neurotoxin sub-subfamily. Expressed by the venom gland.

The protein resides in the secreted. Its function is as follows. Binds with high affinity to muscular (alpha-1/CHRNA1) and neuronal (alpha-7/CHRNA7) nicotinic acetylcholine receptor (nAChR) and inhibits acetylcholine from binding to the receptor, thereby impairing neuromuscular and neuronal transmission. The sequence is that of Long neurotoxin 13 from Drysdalia coronoides (White-lipped snake).